We begin with the raw amino-acid sequence, 494 residues long: Subtilisin-like serine protease Pen ch 18.0101 (494 aa).

The first 16 residues, 1 to 16, serve as a signal peptide directing secretion; sequence MKGFLSLTLLPLLVAA. Residues 17 to 136 constitute a propeptide, removed in mature form; the sequence is SPVAVNSIHN…IEKDSEVRTM (120 aa). An Inhibitor I9 domain is found at 43-136; the sequence is SYIVVFKKHV…IEKDSEVRTM (94 aa). A Peptidase S8 domain is found at 146 to 448; sequence PWGLARISHR…GGSANYTKIL (303 aa). IgE-binding regions lie at residues 180-198 and 209-231; these read VIDTGANVKHVDFEGRANW and EDGNGHGTHCSGTIAGKKFGVAK. Residues aspartate 182 and histidine 214 each act as charge relay system in the active site. N-linked (GlcNAc...) asparagine glycosylation is found at asparagine 244 and asparagine 280. Serine 376 serves as the catalytic Charge relay system. Asparagine 443 carries N-linked (GlcNAc...) asparagine glycosylation. The propeptide at 454-494 is removed in mature form; sequence KAHNAETTVEDRIGIIIDSAEKAFHKELGAIYSEIKDAVSV.

This sequence belongs to the peptidase S8 family.

Functionally, serine protease. This Penicillium rubens protein is Subtilisin-like serine protease Pen ch 18.0101.